The primary structure comprises 387 residues: 3-hydroxy-D-aspartate aldolase (387 aa).

Residue Lys62 is modified to N6-(pyridoxal phosphate)lysine. A pyridoxal 5'-phosphate-binding site is contributed by Gln85. Positions 199 to 228 (HGQLRGPQGQAGRRHCPGERGRGRAGGRGL) are disordered. Pyridoxal 5'-phosphate contacts are provided by residues Thr238, 256-257 (GS), and Tyr265. 2 residues coordinate Mg(2+): His355 and Asp357.

This sequence belongs to the DSD1 family. Homodimer. Pyridoxal 5'-phosphate serves as cofactor. The cofactor is Mn(2+). It depends on Mg(2+) as a cofactor. Requires Co(2+) as cofactor.

The enzyme catalyses (3S)-3-hydroxy-D-aspartate = glyoxylate + glycine. The catalysed reaction is (3R)-3-hydroxy-D-aspartate = glyoxylate + glycine. Functionally, catalyzes the condensation of glyoxylate and glycine into (2R,3S)-beta-hydroxyaspartate ((3S)-3-hydroxy-D-aspartate). Functions in glyoxylate assimilation via the beta-hydroxyaspartate cycle (BHAC). In vitro catalyzes the cleavage of both D-erythro- and D-threo-3-hydroxyaspartate to glycine and glyoxylate. Also acts on D-threonine, D-3-phenylserine and D-3-3,4-methylenedioxyphenylserine. This is 3-hydroxy-D-aspartate aldolase (dhaa) from Paracoccus denitrificans.